The primary structure comprises 70 residues: Cuticle protein 16 isoform b (70 aa).

The sequence is that of Cuticle protein 16 isoform b from Limulus polyphemus (Atlantic horseshoe crab).